Reading from the N-terminus, the 294-residue chain is MTARKPGWLRVNVPGGARYQQVRDTVKGLALHTVCEEAHCPNVAECWGGGTATVMLMGDVCTRGCRFCNVKTDAHPPPLDPDEPRHLAEAIAELGLDYIVVTSVDRDDLPDGGAGHFADAIRRLKDIPQLLVEVLTPDFRGDAEAVRTVGRARPDVFANNLETVRRLTPVVRDLKAGYDQTLAVLARMKREFPRIVTKSSIMVGLGETEDELLEAMGDLRAAGVEILTLGQYLRPSAWHLPVVEYVKPEKFAAWREAGLGLGFRYVASGPLVRSSYRAAELFLRGELASRPPGP.

Cys35, Cys40, Cys46, Cys61, Cys65, Cys68, and Ser275 together coordinate [4Fe-4S] cluster. Residues 46-264 (CWGGGTATVM…REAGLGLGFR (219 aa)) form the Radical SAM core domain.

This sequence belongs to the radical SAM superfamily. Lipoyl synthase family. [4Fe-4S] cluster serves as cofactor.

Its subcellular location is the cytoplasm. It catalyses the reaction [[Fe-S] cluster scaffold protein carrying a second [4Fe-4S](2+) cluster] + N(6)-octanoyl-L-lysyl-[protein] + 2 oxidized [2Fe-2S]-[ferredoxin] + 2 S-adenosyl-L-methionine + 4 H(+) = [[Fe-S] cluster scaffold protein] + N(6)-[(R)-dihydrolipoyl]-L-lysyl-[protein] + 4 Fe(3+) + 2 hydrogen sulfide + 2 5'-deoxyadenosine + 2 L-methionine + 2 reduced [2Fe-2S]-[ferredoxin]. It functions in the pathway protein modification; protein lipoylation via endogenous pathway; protein N(6)-(lipoyl)lysine from octanoyl-[acyl-carrier-protein]: step 2/2. Functionally, catalyzes the radical-mediated insertion of two sulfur atoms into the C-6 and C-8 positions of the octanoyl moiety bound to the lipoyl domains of lipoate-dependent enzymes, thereby converting the octanoylated domains into lipoylated derivatives. This chain is Lipoyl synthase, found in Anaeromyxobacter sp. (strain Fw109-5).